Here is a 61-residue protein sequence, read N- to C-terminus: Double gene block protein 1 (61 aa).

Residues 15-45 form a disordered region; it reads LAGNRGKQKTRRSVAKDAIRKPASDSTNGGN. The interval 17 to 35 is RNA-binding; that stretch reads GNRGKQKTRRSVAKDAIRK. Positions 28–37 are enriched in basic and acidic residues; sequence VAKDAIRKPA.

This sequence belongs to the carmovirus double gene block protein 1 family. As to quaternary structure, homodimer.

Cell-to-cell movement. Displays RNA-binding activity. The protein is Double gene block protein 1 of Carnation mottle virus (isolate China/Shanghai) (CarMV).